We begin with the raw amino-acid sequence, 173 residues long: MGDLPWAPPEAQAPSTAGAGDVAEHQVAPARFLQGAWRQAAGWLCRETGAAPGSAQAGPPETAHAADPQPRGPQAPPRLPPSLSPERVHPGQPAAPAEPAPGAPALRSGPSQPRGLRLPVPVPACAGSSAPGSPAALPDSYPWPPPARNRPATLPPTSRVSPLAAFLASAPQR.

2 disordered regions span residues 1 to 23 (MGDL…GDVA) and 48 to 173 (TGAA…APQR). Positions 49-60 (GAAPGSAQAGPP) are enriched in low complexity. The segment covering 70–83 (PRGPQAPPRLPPSL) has biased composition (pro residues). The segment covering 123–136 (PACAGSSAPGSPAA) has biased composition (low complexity).

This is an uncharacterized protein from Homo sapiens (Human).